A 263-amino-acid chain; its full sequence is uncharacterized protein (263 aa).

7 helical membrane-spanning segments follow: residues 1-21 (MLVIVLQGLAGFLSIIAILCQ), 38-58 (LFLLDFVGNGLYLYCALHYCY), 82-102 (IPISSFLILKDFCVSCCCMMV), 118-138 (GISITSIIIISVFLVLGIFTY), 151-171 (GKFGVFYLEHINYLWVMANLL), 196-216 (FALISFLAESIDLLGRLVIPT), and 230-250 (FWVKLIQFVTLLVILCQVQYV).

Its subcellular location is the membrane. This is an uncharacterized protein from Saccharomyces cerevisiae (strain ATCC 204508 / S288c) (Baker's yeast).